Here is a 139-residue protein sequence, read N- to C-terminus: Nucleoside diphosphate kinase (139 aa).

The ATP site is built by lysine 10, phenylalanine 58, arginine 86, threonine 92, arginine 104, and asparagine 114. Histidine 117 (pros-phosphohistidine intermediate) is an active-site residue.

Belongs to the NDK family. In terms of assembly, homotetramer. It depends on Mg(2+) as a cofactor.

Its subcellular location is the cytoplasm. The catalysed reaction is a 2'-deoxyribonucleoside 5'-diphosphate + ATP = a 2'-deoxyribonucleoside 5'-triphosphate + ADP. It catalyses the reaction a ribonucleoside 5'-diphosphate + ATP = a ribonucleoside 5'-triphosphate + ADP. In terms of biological role, major role in the synthesis of nucleoside triphosphates other than ATP. The ATP gamma phosphate is transferred to the NDP beta phosphate via a ping-pong mechanism, using a phosphorylated active-site intermediate. This chain is Nucleoside diphosphate kinase, found in Rhodococcus opacus (strain B4).